The primary structure comprises 429 residues: 4-hydroxy-3-methylbut-2-en-1-yl diphosphate synthase (flavodoxin) (429 aa).

4 residues coordinate [4Fe-4S] cluster: cysteine 310, cysteine 313, cysteine 356, and glutamate 363.

Belongs to the IspG family. Requires [4Fe-4S] cluster as cofactor.

It carries out the reaction (2E)-4-hydroxy-3-methylbut-2-enyl diphosphate + oxidized [flavodoxin] + H2O + 2 H(+) = 2-C-methyl-D-erythritol 2,4-cyclic diphosphate + reduced [flavodoxin]. Its pathway is isoprenoid biosynthesis; isopentenyl diphosphate biosynthesis via DXP pathway; isopentenyl diphosphate from 1-deoxy-D-xylulose 5-phosphate: step 5/6. Its function is as follows. Converts 2C-methyl-D-erythritol 2,4-cyclodiphosphate (ME-2,4cPP) into 1-hydroxy-2-methyl-2-(E)-butenyl 4-diphosphate. The protein is 4-hydroxy-3-methylbut-2-en-1-yl diphosphate synthase (flavodoxin) of Bradyrhizobium sp. (strain BTAi1 / ATCC BAA-1182).